The primary structure comprises 236 residues: C-&gt;U-editing enzyme APOBEC-1 (236 aa).

Residues glycine 10–leucine 134 enclose the CMP/dCMP-type deaminase domain. Residue histidine 61 participates in Zn(2+) binding. The Proton donor role is filled by glutamate 63. Cysteine 93 and cysteine 96 together coordinate Zn(2+).

It belongs to the cytidine and deoxycytidylate deaminase family. As to quaternary structure, homodimer. Interacts with A1CF; form an mRNA editing complex. Interacts with RBM47; form an mRNA editing complex. Found in a complex with CELF2/CUGBP2 and A1CF. Interacts with HNRPAB. Interacts with SYNCRIP. Zn(2+) serves as cofactor.

It localises to the cytoplasm. The protein localises to the nucleus. The enzyme catalyses a cytidine in mRNA + H2O + H(+) = a uridine in mRNA + NH4(+). It catalyses the reaction cytidine(6666) in apoB mRNA + H2O + H(+) = uridine(6666) in apoB mRNA + NH4(+). Functionally, cytidine deaminase catalyzing the cytidine to uridine postranscriptional editing of a variety of mRNAs. Form complexes with cofactors that confer differential editing activity and selectivity. Responsible for the postranscriptional editing of a CAA codon for Gln to a UAA codon for stop in the apolipoprotein B mRNA. Also involved in CGA (Arg) to UGA (Stop) editing in the NF1 mRNA. May also play a role in the epigenetic regulation of gene expression by participating in DNA demethylation. The polypeptide is C-&gt;U-editing enzyme APOBEC-1 (Pongo pygmaeus (Bornean orangutan)).